The chain runs to 132 residues: Small ribosomal subunit protein uS8 (132 aa).

It belongs to the universal ribosomal protein uS8 family. Part of the 30S ribosomal subunit. Contacts proteins S5 and S12.

Functionally, one of the primary rRNA binding proteins, it binds directly to 16S rRNA central domain where it helps coordinate assembly of the platform of the 30S subunit. This Bifidobacterium longum (strain NCC 2705) protein is Small ribosomal subunit protein uS8.